The chain runs to 319 residues: Olfactory receptor 13F1 (319 aa).

The Extracellular portion of the chain corresponds to 1-25 (MFPANWTSVKVFFFLGFFHYPKVQV). An N-linked (GlcNAc...) asparagine glycan is attached at Asn5. Residues 26 to 46 (IIFAVCLLMYLITLLGNIFLI) traverse the membrane as a helical segment. The Cytoplasmic portion of the chain corresponds to 47–54 (SITILDSH). The chain crosses the membrane as a helical span at residues 55 to 75 (LHTPMYLFLSNLSFLDIWYSS). Residues 76 to 99 (SALSPMLANFVSGRNTISFSGCAT) are Extracellular-facing. Cys97 and Cys189 are oxidised to a cystine. Residues 100 to 120 (QMYLSLAMGSTECVLLPMMAY) form a helical membrane-spanning segment. The Cytoplasmic portion of the chain corresponds to 121–139 (DRYVAICNPLRYPVIMNRR). Residues 140–160 (TCVQIAAGSWMTGCLTAMVEM) form a helical membrane-spanning segment. Residues 161–197 (MSVLPLSLCGNSIINHFTCEILAILKLVCVDTSLVQL) lie on the Extracellular side of the membrane. The chain crosses the membrane as a helical span at residues 198-217 (IMLVISVLLLPMPMLLICIS). The Cytoplasmic segment spans residues 218–237 (YAFILASILRISSVEGRSKA). A helical transmembrane segment spans residues 238–258 (FSTCTAHLMVVVLFYGTALSM). Over 259–271 (HLKPSAVDSQEID) the chain is Extracellular. The helical transmembrane segment at 272 to 292 (KFMALVYAGQTPMLNPIIYSL) threads the bilayer. Residues 293-319 (RNKEVKVALKKLLIRNHFNTAFISILK) lie on the Cytoplasmic side of the membrane.

This sequence belongs to the G-protein coupled receptor 1 family.

It is found in the cell membrane. Functionally, odorant receptor. In Homo sapiens (Human), this protein is Olfactory receptor 13F1 (OR13F1).